The following is a 396-amino-acid chain: MTGTQILELFGPAPEPPSELGRYRILSPTAGIRVSPLQLGALSIGDAWSADLGSMDKDSAMALLDAYAASGGNFIDTANAYQNEQSETWIGEWMANRNNRDQMVIATKFGPDYRAHELGKGLAVNYSGNHKRSLHMSVRDSLRKLQTSWIDILYLHTWDYTTSVPELMDALHHLVQRGEVLYLGICNTPAWVVSAANTYAQQQGKTQFSVYQGRWNPLRRELERDILPMARHFGMAITVYDALGSGKFQSRKMLARRKDQGEGLRAIYGRQQTAQEEAMSNALGVVAAQHGIESVTAVALAYLLAKAPYVFPIIGGRKIQHLHDNIQALSLRLTHEEIKYLESVGDFDLGFPYDMVGVDPADTGMATPIVAQAAPMAFVQRSKAIGYSESNKGLSE.

Asp76 lines the NADP(+) pocket. Tyr81 serves as the catalytic Proton donor. His156 is a substrate binding site. Residues 186-187, Gln212, 241-251, and 317-325 each bind NADP(+); these read CN, DALGSGKFQSR, and RKIQHLHDN.

Belongs to the aldo/keto reductase family. Aldo/keto reductase 2 subfamily. As to quaternary structure, homodimer.

The protein operates within secondary metabolite biosynthesis; terpenoid biosynthesis. In terms of biological role, aldo-keto reductase; part of the gene cluster that mediates the biosynthesis of calidodehydroaustin, a fungal meroterpenoid. The first step of the pathway is the synthesis of 3,5-dimethylorsellinic acid by the polyketide synthase ausA. 3,5-dimethylorsellinic acid is then prenylated by the polyprenyl transferase ausN. Further epoxidation by the FAD-dependent monooxygenase ausM and cyclization by the probable terpene cyclase ausL lead to the formation of protoaustinoid A. Protoaustinoid A is then oxidized to spiro-lactone preaustinoid A3 by the combined action of the FAD-binding monooxygenases ausB and ausC, and the dioxygenase ausE. Acid-catalyzed keto-rearrangement and ring contraction of the tetraketide portion of preaustinoid A3 by ausJ lead to the formation of preaustinoid A4. The aldo-keto reductase ausK, with the help of ausH, is involved in the next step by transforming preaustinoid A4 into isoaustinone which is in turn hydroxylated by the P450 monooxygenase ausI to form austinolide. The cytochrome P450 monooxygenase ausG modifies austinolide to austinol. Austinol is further acetylated to austin by the O-acetyltransferase ausP, which spontaneously changes to dehydroaustin. The cytochrome P450 monooxygenase ausR then converts dehydroaustin is into 7-dehydrodehydroaustin. The hydroxylation catalyzed by ausR permits the O-acetyltransferase ausQ to add an additional acetyl group to the molecule, leading to the formation of acetoxydehydroaustin. The short chain dehydrogenase ausT catalyzes the reduction of the double bond present between carbon atoms 1 and 2 to convert 7-dehydrodehydroaustin into 1,2-dihydro-7-hydroxydehydroaustin. AusQ catalyzes not only an acetylation reaction but also the addition of the PKS ausV diketide product to 1,2-dihydro-7-hydroxydehydroaustin, forming precalidodehydroaustin. Finally, the iron/alpha-ketoglutarate-dependent dioxygenase converts precalidodehydroaustin into calidodehydroaustin. The chain is Aldo-keto reductase ausK from Aspergillus calidoustus.